Here is a 140-residue protein sequence, read N- to C-terminus: Cytochrome c oxidase subunit 6, mitochondrial (140 aa).

It belongs to the cytochrome c oxidase subunit 5A family. Component of the cytochrome c oxidase (complex IV, CIV), a multisubunit enzyme composed of a catalytic core of 3 subunits and several supernumerary subunits. The complex exists as a monomer or a dimer and forms supercomplexes (SCs) in the inner mitochondrial membrane with ubiquinol-cytochrome c oxidoreductase (cytochrome b-c1 complex, complex III, CIII).

Its subcellular location is the mitochondrion inner membrane. It participates in energy metabolism; oxidative phosphorylation. In terms of biological role, component of the cytochrome c oxidase, the last enzyme in the mitochondrial electron transport chain which drives oxidative phosphorylation. The respiratory chain contains 3 multisubunit complexes succinate dehydrogenase (complex II, CII), ubiquinol-cytochrome c oxidoreductase (cytochrome b-c1 complex, complex III, CIII) and cytochrome c oxidase (complex IV, CIV), that cooperate to transfer electrons derived from NADH and succinate to molecular oxygen, creating an electrochemical gradient over the inner membrane that drives transmembrane transport and the ATP synthase. Cytochrome c oxidase is the component of the respiratory chain that catalyzes the reduction of oxygen to water. Electrons originating from reduced cytochrome c in the intermembrane space (IMS) are transferred via the dinuclear copper A center (CU(A)) of subunit 2 and heme A of subunit 1 to the active site in subunit 1, a binuclear center (BNC) formed by heme A3 and copper B (CU(B)). The BNC reduces molecular oxygen to 2 water molecules using 4 electrons from cytochrome c in the IMS and 4 protons from the mitochondrial matrix. This chain is Cytochrome c oxidase subunit 6, mitochondrial (cox6), found in Schizosaccharomyces pombe (strain 972 / ATCC 24843) (Fission yeast).